The following is a 611-amino-acid chain: Protein Spindly (611 aa).

The stretch at 1–288 (MEESETVLKL…QFQSLQKQHA (288 aa)) forms a coiled coil. Basic and acidic residues predominate over residues 499–511 (LKEDSSLSTKEQD). The segment at 499–611 (LKEDSSLSTK…PAATTQCPQQ (113 aa)) is disordered. A compositionally biased stretch (polar residues) spans 549–567 (RNTNNCSVTSTSPRSASEE). Basic and acidic residues predominate over residues 570 to 583 (SESKRFDEEQEKRK).

Belongs to the Spindly family.

Its subcellular location is the chromosome. It localises to the centromere. The protein resides in the kinetochore. In terms of biological role, required for the localization of dynein and dynactin to the mitotic kintochore. Dynein is believed to control the initial lateral interaction between the kinetochore and spindle microtubules and to facilitate the subsequent formation of end-on kinetochore-microtubule attachments mediated by the NDC80 complex. May act as an adapter protein linking the dynein motor complex to various cargos. The sequence is that of Protein Spindly (spdl1) from Xenopus tropicalis (Western clawed frog).